The chain runs to 76 residues: COMM domain-containing protein 6 (76 aa).

The 68-residue stretch at 9–76 (KLVDFQWKLG…KDMSNMIETL (68 aa)) folds into the COMM domain.

Belongs to the COMM domain-containing protein 6 family. In terms of assembly, component of the commander complex consisting of the CCC subcomplex and the retriever subcomplex. Component of the CCC subcomplex.

In terms of biological role, scaffold protein in the commander complex that is essential for endosomal recycling of transmembrane cargos; the commander complex is composed of the CCC subcomplex and the retriever subcomplex. The sequence is that of COMM domain-containing protein 6 (commd6) from Dictyostelium discoideum (Social amoeba).